A 141-amino-acid chain; its full sequence is uncharacterized protein (141 aa).

Positions 24–52 (KVQTALQKEAKTIKREQKKIKDEIDTFKT) form a coiled coil.

This is an uncharacterized protein from Invertebrate iridescent virus 6 (IIV-6).